The chain runs to 1061 residues: E3 ubiquitin-protein ligase Smurf1 (1061 aa).

One can recognise a C2 domain in the interval 1–116 (MNKLDYPRRN…KGAGFQRLDL (116 aa)). Disordered stretches follow at residues 143–176 (SGNPLAIVGPSGDVRGPSEDDSSEDSLPEGWEER) and 188–496 (HATK…SGQR). One can recognise a WW 1 domain in the interval 167-200 (DSLPEGWEERRTDNGRVYYVNHATKSTQWDRPRQ). Composition is skewed to polar residues over residues 207–225 (SHATSPQQRHNTHNGNSGD) and 233–255 (TRSTTCTNLMNNGHRSRDLSVTA). Ser-262 is subject to Phosphoserine. Positions 264 to 273 (EILSSVGKEN) are enriched in polar residues. 2 stretches are compositionally biased toward low complexity: residues 274–300 (TSPTTPVSATTTPGKKTSSSNSSSAGG) and 311–322 (PATPTSSTTSAS). Positions 348 to 359 (TPTSPTGQQNYV) are enriched in polar residues. Over residues 360–378 (NGNAQNGSTSGNGSGQAAQ) the composition is skewed to low complexity. The segment covering 379–392 (PQSASNGWTQEDAA) has biased composition (polar residues). Residues 393-409 (TTTSPSTTTSPPRHSQS) are compositionally biased toward low complexity. Residue Thr-412 is modified to Phosphothreonine. At Ser-416 the chain carries Phosphoserine. The segment covering 417 to 439 (PPASVTPSANGNVHSPNANSTPA) has biased composition (polar residues). Gly residues predominate over residues 480-494 (RNGGTSGGGGGGGSG). WW domains lie at 513–546 (LDLPPGYEMRTTQQGQVYFYHIPTGVSTWHDPRI) and 561–594 (GPLPSGWEQRKTASGRVYFVDHNNRTTQFTDPRL). Residues 513-602 (LDLPPGYEMR…RLSGSILQMI (90 aa)) form an interaction with MAD region. Low complexity-rich tracts occupy residues 608–617 (PPTSAANAGT) and 624–656 (TPATPSAAAAVPPQATPASNATPTTLTTTTNPP). Positions 608–661 (PPTSAANAGTPAPPSATPATPSAAAAVPPQATPASNATPTTLTTTTNPPHRIVP) are disordered. The 339-residue stretch at 723 to 1061 (RAKDMRKRLM…VEETCGFAVE (339 aa)) folds into the HECT domain. Cys-1029 serves as the catalytic Glycyl thioester intermediate.

In terms of assembly, interacts with phosphorylated MAD.

The catalysed reaction is S-ubiquitinyl-[E2 ubiquitin-conjugating enzyme]-L-cysteine + [acceptor protein]-L-lysine = [E2 ubiquitin-conjugating enzyme]-L-cysteine + N(6)-ubiquitinyl-[acceptor protein]-L-lysine.. The protein operates within protein modification; protein ubiquitination. E3 ubiquitin-protein ligase which accepts ubiquitin from an E2 ubiquitin-conjugating enzyme in the form of a thioester and then directly transfers the ubiquitin to targeted substrates. Down-regulates Dpp signaling after gastrulation by promoting MAD ubiquitination and subsequent degradation. This chain is E3 ubiquitin-protein ligase Smurf1, found in Drosophila melanogaster (Fruit fly).